The sequence spans 103 residues: Alpha-ketoglutarate dehydrogenase component 4 (103 aa).

Met1 is subject to N-acetylmethionine. Lys5 carries the N6-succinyllysine modification. The interval 23-70 is disordered; that stretch reads IRFPDRRDNPKPNVSEVLRSAGLPSHTSSISQHSKGSKSPDWLMHQGP. Residues 47–61 show a composition bias toward low complexity; sequence SHTSSISQHSKGSKS. 2 positions are modified to phosphoserine: Ser61 and Ser90.

This sequence belongs to the alpha-ketoglutarate dehydrogenase component 4 family. As to quaternary structure, component of the 2-oxoglutarate dehydrogenase complex (OGDHC), composed of OGDH (2-oxoglutarate dehydrogenase; also called E1 subunit), DLST (dihydrolipoamide succinyltransferase; also called E2 subunit) and DLD (dihydrolipoamide dehydrogenase; also called E3 subunit), and the assembly factor KGD4. Within OGDHC complex, interacts (via N-terminus) with E3 subunit and (via C-terminus) with E2 subunit.

The protein localises to the mitochondrion. In terms of biological role, molecular adapter that is necessary to form a stable 2-oxoglutarate dehydrogenase enzyme complex (OGDHC). Enables the specific recruitment of E3 subunit to E2 subunit in the 2-oxoglutarate dehydrogenase complex (OGDHC). This chain is Alpha-ketoglutarate dehydrogenase component 4 (KGD4), found in Bos taurus (Bovine).